Consider the following 306-residue polypeptide: Lipid A biosynthesis lauroyltransferase (306 aa).

A helical transmembrane segment spans residues 17–37; that stretch reads WLTWLGIGVLWLVVQLPYPVI. An HXXXXD motif motif is present at residues 132 to 137; the sequence is HFLTLE.

This sequence belongs to the LpxL/LpxM/LpxP family. Monomer.

It is found in the cell inner membrane. The enzyme catalyses dodecanoyl-[ACP] + alpha-Kdo-(2-&gt;4)-alpha-Kdo-(2-&gt;6)-lipid IVA (E. coli) = alpha-Kdo-(2-&gt;4)-alpha-Kdo-(2-&gt;6)-(dodecanoyl)-lipid IVA (E. coli) + holo-[ACP]. It functions in the pathway glycolipid biosynthesis; KDO(2)-lipid A biosynthesis; KDO(2)-lipid A from CMP-3-deoxy-D-manno-octulosonate and lipid IV(A): step 3/4. Its pathway is bacterial outer membrane biogenesis; lipopolysaccharide biosynthesis. Its function is as follows. Catalyzes the transfer of laurate from lauroyl-[acyl-carrier-protein] (ACP) to Kdo(2)-lipid IV(A) to form Kdo(2)-(lauroyl)-lipid IV(A). Has 10 fold selectivity for lauroyl-ACP over myristoyl-ACP. In vitro, can also catalyze a slow second acylation reaction leading to the formation of Kdo(2)-(dilauroyl)-lipid IV(A). The chain is Lipid A biosynthesis lauroyltransferase from Escherichia coli (strain K12).